The chain runs to 355 residues: D-alanine--D-alanine ligase (355 aa).

The region spanning 143–350 is the ATP-grasp domain; it reads KQIFSNLSIP…IDQLVAKLID (208 aa). Residue 178–233 coordinates ATP; the sequence is IEKLNLPVFVKPANSGSSLGISKAKNKSEIIKALQKAWEIDSRIVIEEGLNVRELE. Residues aspartate 303, glutamate 317, and asparagine 319 each coordinate Mg(2+).

Belongs to the D-alanine--D-alanine ligase family. Mg(2+) is required as a cofactor. The cofactor is Mn(2+).

It is found in the cytoplasm. The enzyme catalyses 2 D-alanine + ATP = D-alanyl-D-alanine + ADP + phosphate + H(+). It participates in cell wall biogenesis; peptidoglycan biosynthesis. Cell wall formation. In Prochlorococcus marinus (strain MIT 9515), this protein is D-alanine--D-alanine ligase.